The following is a 576-amino-acid chain: Arginine--tRNA ligase (576 aa).

Positions 128–136 match the 'HIGH' region motif; it reads PTGPMHIGH.

Belongs to the class-I aminoacyl-tRNA synthetase family. As to quaternary structure, monomer.

The protein localises to the cytoplasm. The enzyme catalyses tRNA(Arg) + L-arginine + ATP = L-arginyl-tRNA(Arg) + AMP + diphosphate. This Rickettsia conorii (strain ATCC VR-613 / Malish 7) protein is Arginine--tRNA ligase.